The sequence spans 170 residues: Protein-export protein SecB (170 aa).

Belongs to the SecB family. In terms of assembly, homotetramer, a dimer of dimers. One homotetramer interacts with 1 SecA dimer.

It localises to the cytoplasm. Its function is as follows. One of the proteins required for the normal export of preproteins out of the cell cytoplasm. It is a molecular chaperone that binds to a subset of precursor proteins, maintaining them in a translocation-competent state. It also specifically binds to its receptor SecA. This Xanthomonas axonopodis pv. citri (strain 306) protein is Protein-export protein SecB.